A 397-amino-acid polypeptide reads, in one-letter code: Riboflavin biosynthesis protein RibBA (397 aa).

The segment at 1–199 (MFHRIEEALE…IEDLIAYRRH (199 aa)) is DHBP synthase. D-ribulose 5-phosphate-binding positions include 26–27 (RE), D31, 138–142 (RAGHT), and E162. A Mg(2+)-binding site is contributed by E27. Residue H141 participates in Mg(2+) binding. Positions 200–397 (HETLVTREAE…VNKLGHLLNL (198 aa)) are GTP cyclohydrolase II. 250–254 (RVHSE) lines the GTP pocket. 3 residues coordinate Zn(2+): C255, C266, and C268. GTP contacts are provided by residues Q271, 293-295 (EGR), and T315. D327 functions as the Proton acceptor; for GTP cyclohydrolase activity in the catalytic mechanism. Catalysis depends on R329, which acts as the Nucleophile; for GTP cyclohydrolase activity. 2 residues coordinate GTP: T350 and K355.

In the N-terminal section; belongs to the DHBP synthase family. It in the C-terminal section; belongs to the GTP cyclohydrolase II family. The cofactor is Mg(2+). Requires Mn(2+) as cofactor. Zn(2+) serves as cofactor.

The catalysed reaction is D-ribulose 5-phosphate = (2S)-2-hydroxy-3-oxobutyl phosphate + formate + H(+). It catalyses the reaction GTP + 4 H2O = 2,5-diamino-6-hydroxy-4-(5-phosphoribosylamino)-pyrimidine + formate + 2 phosphate + 3 H(+). The protein operates within cofactor biosynthesis; riboflavin biosynthesis; 2-hydroxy-3-oxobutyl phosphate from D-ribulose 5-phosphate: step 1/1. It participates in cofactor biosynthesis; riboflavin biosynthesis; 5-amino-6-(D-ribitylamino)uracil from GTP: step 1/4. In terms of biological role, catalyzes the conversion of D-ribulose 5-phosphate to formate and 3,4-dihydroxy-2-butanone 4-phosphate. Its function is as follows. Catalyzes the conversion of GTP to 2,5-diamino-6-ribosylamino-4(3H)-pyrimidinone 5'-phosphate (DARP), formate and pyrophosphate. In Bacillus cereus (strain ATCC 14579 / DSM 31 / CCUG 7414 / JCM 2152 / NBRC 15305 / NCIMB 9373 / NCTC 2599 / NRRL B-3711), this protein is Riboflavin biosynthesis protein RibBA.